The primary structure comprises 83 residues: Kunitz-type serine protease inhibitor blackelin-3 (83 aa).

An N-terminal signal peptide occupies residues 1–24; the sequence is MSSGGLLLLLGLLTLWEVLTPVSS. One can recognise a BPTI/Kunitz inhibitor domain in the interval 31–81; that stretch reads CELPADPGPCNGLFQAFYYNPVQRKCLKFRYGGCKANPNTFKTIEECKRIC. 3 disulfide bridges follow: cysteine 31-cysteine 81, cysteine 40-cysteine 64, and cysteine 56-cysteine 77.

The protein belongs to the venom Kunitz-type family. Expressed by the venom gland.

It is found in the secreted. Its function is as follows. Serine protease inhibitor. This Pseudechis porphyriacus (Red-bellied black snake) protein is Kunitz-type serine protease inhibitor blackelin-3.